The chain runs to 173 residues: Crossover junction endodeoxyribonuclease RuvC (173 aa).

Active-site residues include Asp8, Glu67, and Asp139. 3 residues coordinate Mg(2+): Asp8, Glu67, and Asp139.

The protein belongs to the RuvC family. Homodimer which binds Holliday junction (HJ) DNA. The HJ becomes 2-fold symmetrical on binding to RuvC with unstacked arms; it has a different conformation from HJ DNA in complex with RuvA. In the full resolvosome a probable DNA-RuvA(4)-RuvB(12)-RuvC(2) complex forms which resolves the HJ. The cofactor is Mg(2+).

It is found in the cytoplasm. It catalyses the reaction Endonucleolytic cleavage at a junction such as a reciprocal single-stranded crossover between two homologous DNA duplexes (Holliday junction).. In terms of biological role, the RuvA-RuvB-RuvC complex processes Holliday junction (HJ) DNA during genetic recombination and DNA repair. Endonuclease that resolves HJ intermediates. Cleaves cruciform DNA by making single-stranded nicks across the HJ at symmetrical positions within the homologous arms, yielding a 5'-phosphate and a 3'-hydroxyl group; requires a central core of homology in the junction. The consensus cleavage sequence is 5'-(A/T)TT(C/G)-3'. Cleavage occurs on the 3'-side of the TT dinucleotide at the point of strand exchange. HJ branch migration catalyzed by RuvA-RuvB allows RuvC to scan DNA until it finds its consensus sequence, where it cleaves and resolves the cruciform DNA. The chain is Crossover junction endodeoxyribonuclease RuvC from Vibrio campbellii (strain ATCC BAA-1116).